A 330-amino-acid chain; its full sequence is Ketol-acid reductoisomerase (NADP(+)) (330 aa).

In terms of domain architecture, KARI N-terminal Rossmann spans 2–181 (AKVYYDNDVN…GATRAGVIET (180 aa)). NADP(+) contacts are provided by residues 25–28 (YGSQ), arginine 48, serine 52, and 82–85 (DEVQ). The active site involves histidine 107. Residue glycine 133 coordinates NADP(+). The 146-residue stretch at 182–327 (TFKEETETDL…ADLRMMMPFI (146 aa)) folds into the KARI C-terminal knotted domain. Aspartate 190, glutamate 194, glutamate 226, and glutamate 230 together coordinate Mg(2+). Serine 251 contributes to the substrate binding site.

The protein belongs to the ketol-acid reductoisomerase family. It depends on Mg(2+) as a cofactor.

The enzyme catalyses (2R)-2,3-dihydroxy-3-methylbutanoate + NADP(+) = (2S)-2-acetolactate + NADPH + H(+). It carries out the reaction (2R,3R)-2,3-dihydroxy-3-methylpentanoate + NADP(+) = (S)-2-ethyl-2-hydroxy-3-oxobutanoate + NADPH + H(+). It participates in amino-acid biosynthesis; L-isoleucine biosynthesis; L-isoleucine from 2-oxobutanoate: step 2/4. It functions in the pathway amino-acid biosynthesis; L-valine biosynthesis; L-valine from pyruvate: step 2/4. In terms of biological role, involved in the biosynthesis of branched-chain amino acids (BCAA). Catalyzes an alkyl-migration followed by a ketol-acid reduction of (S)-2-acetolactate (S2AL) to yield (R)-2,3-dihydroxy-isovalerate. In the isomerase reaction, S2AL is rearranged via a Mg-dependent methyl migration to produce 3-hydroxy-3-methyl-2-ketobutyrate (HMKB). In the reductase reaction, this 2-ketoacid undergoes a metal-dependent reduction by NADPH to yield (R)-2,3-dihydroxy-isovalerate. This chain is Ketol-acid reductoisomerase (NADP(+)), found in Macrococcus caseolyticus (strain JCSC5402) (Macrococcoides caseolyticum).